The chain runs to 43 residues: Photosystem II reaction center protein Psb30 (43 aa).

A helical membrane pass occupies residues 16-36 (IAQLTMLAMVLIAGPVVIVLL).

Belongs to the Psb30/Ycf12 family. PSII is composed of 1 copy each of membrane proteins PsbA, PsbB, PsbC, PsbD, PsbE, PsbF, PsbH, PsbI, PsbJ, PsbK, PsbL, PsbM, PsbT, PsbX, PsbY, PsbZ, Psb30/Ycf12, peripheral proteins PsbO, CyanoQ (PsbQ), PsbU, PsbV and a large number of cofactors. It forms dimeric complexes.

It localises to the cellular thylakoid membrane. A core subunit of photosystem II (PSII), probably helps stabilize the reaction center. In Trichodesmium erythraeum (strain IMS101), this protein is Photosystem II reaction center protein Psb30.